The following is a 128-amino-acid chain: Protein ripply2 (128 aa).

Residues 1-63 (MENAGGAEGT…HAAEAMPDGP (63 aa)) are disordered. The segment covering 9–22 (GTESGAAACAATDG) has biased composition (low complexity). Positions 37 to 40 (WRPW) match the WRPW motif motif. The tract at residues 77–112 (HPVRLFWPKSKCYDYLYQEAEALLKNFPIQATISFY) is ripply homology domain.

Belongs to the ripply family.

Its subcellular location is the nucleus. In terms of biological role, plays a role in somitogenesis. Required for somite segregation and establishment of rostrocaudal polarity in somites. The polypeptide is Protein ripply2 (RIPPLY2) (Homo sapiens (Human)).